Consider the following 73-residue polypeptide: Methionyl-tRNA formyltransferase (73 aa).

Belongs to the Fmt family.

It catalyses the reaction L-methionyl-tRNA(fMet) + (6R)-10-formyltetrahydrofolate = N-formyl-L-methionyl-tRNA(fMet) + (6S)-5,6,7,8-tetrahydrofolate + H(+). Functionally, attaches a formyl group to the free amino group of methionyl-tRNA(fMet). The formyl group appears to play a dual role in the initiator identity of N-formylmethionyl-tRNA by promoting its recognition by IF2 and preventing the misappropriation of this tRNA by the elongation apparatus. The polypeptide is Methionyl-tRNA formyltransferase (fmt) (Rickettsia parkeri).